The sequence spans 118 residues: Non-specific lipid-transfer protein 3 (118 aa).

The N-terminal stretch at 1 to 25 (MARSMNLACVALVMCMVVIAPMAEA) is a signal peptide. Disulfide bonds link cysteine 29-cysteine 76, cysteine 39-cysteine 53, cysteine 54-cysteine 99, and cysteine 74-cysteine 113.

The protein belongs to the plant LTP family.

Functionally, plant non-specific lipid-transfer proteins transfer phospholipids as well as galactolipids across membranes. May play a role in wax or cutin deposition in the cell walls of expanding epidermal cells and certain secretory tissues. This Lens culinaris (Lentil) protein is Non-specific lipid-transfer protein 3.